We begin with the raw amino-acid sequence, 277 residues long: Ribosomal RNA small subunit methyltransferase A (277 aa).

The S-adenosyl-L-methionine site is built by asparagine 27, leucine 29, glycine 54, glutamate 75, aspartate 95, and asparagine 118.

It belongs to the class I-like SAM-binding methyltransferase superfamily. rRNA adenine N(6)-methyltransferase family. RsmA subfamily.

The protein localises to the cytoplasm. It catalyses the reaction adenosine(1518)/adenosine(1519) in 16S rRNA + 4 S-adenosyl-L-methionine = N(6)-dimethyladenosine(1518)/N(6)-dimethyladenosine(1519) in 16S rRNA + 4 S-adenosyl-L-homocysteine + 4 H(+). Specifically dimethylates two adjacent adenosines (A1518 and A1519) in the loop of a conserved hairpin near the 3'-end of 16S rRNA in the 30S particle. May play a critical role in biogenesis of 30S subunits. The sequence is that of Ribosomal RNA small subunit methyltransferase A from Chlamydia muridarum (strain MoPn / Nigg).